Consider the following 349-residue polypeptide: Crinkler effector protein 5 (349 aa).

The N-terminal stretch at 1–17 (MVKLFCSIVGVAGSPFS) is a signal peptide. The segment at 18-57 (VEVNEGKTVDDLKKAIKAENLDDPTLRNVAPKNLQLFLAK) is LQLFLAK domain. The segment at 58-108 (KGDAWLRYNEDLDTYLQSEIDTSSYLHMRASWKLSKPTLFGPDVSLGEDVV) is DWL domain. Positions 109–115 (HVLVVVP) match the HVLVXXP motif motif.

This sequence belongs to the Crinkler effector family.

The protein localises to the secreted. Its subcellular location is the host nucleus. Secreted effector that elicits necrosis in host plants, a characteristic of plant innate immunity. The chain is Crinkler effector protein 5 from Phytophthora infestans (Potato late blight agent).